The following is a 671-amino-acid chain: DNA ligase (671 aa).

Residues 31–35, 80–81, and E110 each bind NAD(+); these read DAEYD and SL. Catalysis depends on K112, which acts as the N6-AMP-lysine intermediate. 4 residues coordinate NAD(+): R133, E167, K283, and K307. 4 residues coordinate Zn(2+): C401, C404, C419, and C424. The BRCT domain occupies 587–671; it reads EEELVFAGKT…YLPDEGGLNE (85 aa).

The protein belongs to the NAD-dependent DNA ligase family. LigA subfamily. Mg(2+) serves as cofactor. Mn(2+) is required as a cofactor.

The catalysed reaction is NAD(+) + (deoxyribonucleotide)n-3'-hydroxyl + 5'-phospho-(deoxyribonucleotide)m = (deoxyribonucleotide)n+m + AMP + beta-nicotinamide D-nucleotide.. In terms of biological role, DNA ligase that catalyzes the formation of phosphodiester linkages between 5'-phosphoryl and 3'-hydroxyl groups in double-stranded DNA using NAD as a coenzyme and as the energy source for the reaction. It is essential for DNA replication and repair of damaged DNA. In Listeria monocytogenes serotype 4b (strain CLIP80459), this protein is DNA ligase.